The primary structure comprises 824 residues: Type IV secretion system protein PtlC homolog (824 aa).

456 to 463 (GQSGSGKT) is a binding site for ATP.

This sequence belongs to the TrbE/VirB4 family.

The protein localises to the cell membrane. The chain is Type IV secretion system protein PtlC homolog (ptlC) from Bordetella bronchiseptica (strain ATCC BAA-588 / NCTC 13252 / RB50) (Alcaligenes bronchisepticus).